The sequence spans 211 residues: MIDSAFVVLPHDLLWGMPLSALPDDAPQWAVDTLLAGQPVVVRRQAMPAGQVAVGLRGRGREQRYAASMWLTNVYRRVTPEQLIDCPSEHIQDWPALRALRQVRPVMDALERVWGVGGSAGFELASGIAALNQDSDLDLILRTPAPFSRRCAAELVEALAASVCRVDVQLQLDQGAVALREWARPAGRVLLKTASGARLVSDPWHLAEVCA.

Active-site residues include D136 and D138.

Belongs to the MdcG family.

It carries out the reaction apo-[malonate decarboxylase ACP] + 2'-(5''-triphospho-alpha-D-ribosyl)-3'-dephospho-CoA = holo-[malonate decarboxylase ACP] + diphosphate. Transfers 2'-(5-triphosphoribosyl)-3'-dephosphocoenzyme-A to the apo-[acyl-carrier-protein] of the malonate decarboxylase to yield holo-[acyl-carrier-protein]. This is Phosphoribosyl-dephospho-CoA transferase from Pseudomonas syringae pv. tomato (strain ATCC BAA-871 / DC3000).